Here is a 248-residue protein sequence, read N- to C-terminus: Homeobox-leucine zipper protein HOX15 (248 aa).

Residues 1-44 are disordered; that stretch reads MAQDDEDVGLALGLSLGSGGHRRQRESRDEAPSSAAASLLTLRL. Residues 32–44 show a composition bias toward low complexity; that stretch reads PSSAAASLLTLRL. Positions 91 to 150 form a DNA-binding region, homeobox; it reads NSRKKLRLSKEQSALLEDRFKEHSTLNPKQKVALAKQLNLRPRQVEVWFQNRRARTKLKQ. The interval 149 to 193 is leucine-zipper; sequence KQTEVDCELLKRCCETLTEENRRLHRELQQLRALTHSTAAGFFMA. The interval 223 to 248 is disordered; sequence PTAAADRTNKPTAPHLFSPFAKSAAC.

The protein belongs to the HD-ZIP homeobox family. Class II subfamily. In terms of tissue distribution, expressed in seedlings, stems, leaf blades and panicles.

It is found in the nucleus. Probable transcription factor. The polypeptide is Homeobox-leucine zipper protein HOX15 (HOX15) (Oryza sativa subsp. indica (Rice)).